Consider the following 99-residue polypeptide: MKLIFDIQLFAHKKAGGSTRNGRDSESKRLGVKRSDGQFVLAGNILVRQRGTKFHPGKNVGRGGDDTLFALVTGYVKFENKRGRKVVSVIPAEEMVAAQ.

Residues 1-10 (MKLIFDIQLF) constitute a propeptide that is removed on maturation.

The protein belongs to the bacterial ribosomal protein bL27 family. The N-terminus is cleaved by ribosomal processing cysteine protease Prp.

This is Large ribosomal subunit protein bL27 from Caldicellulosiruptor saccharolyticus (strain ATCC 43494 / DSM 8903 / Tp8T 6331).